We begin with the raw amino-acid sequence, 41 residues long: Cytochrome b559 subunit beta (41 aa).

The chain crosses the membrane as a helical span at residues 16-32; sequence WLAIHALAVPTVFFLGS. A heme-binding site is contributed by His-20.

Belongs to the PsbE/PsbF family. As to quaternary structure, heterodimer of an alpha subunit and a beta subunit. PSII is composed of 1 copy each of membrane proteins PsbA, PsbB, PsbC, PsbD, PsbE, PsbF, PsbH, PsbI, PsbJ, PsbK, PsbL, PsbM, PsbT, PsbX, PsbY, PsbZ, Psb30/Ycf12, at least 3 peripheral proteins of the oxygen-evolving complex and a large number of cofactors. It forms dimeric complexes. Heme b is required as a cofactor.

The protein localises to the plastid. Its subcellular location is the chloroplast thylakoid membrane. In terms of biological role, this b-type cytochrome is tightly associated with the reaction center of photosystem II (PSII). PSII is a light-driven water:plastoquinone oxidoreductase that uses light energy to abstract electrons from H(2)O, generating O(2) and a proton gradient subsequently used for ATP formation. It consists of a core antenna complex that captures photons, and an electron transfer chain that converts photonic excitation into a charge separation. In Oltmannsiellopsis viridis (Marine flagellate), this protein is Cytochrome b559 subunit beta.